The following is a 309-amino-acid chain: Olfactory receptor 8A1 (309 aa).

Residues 1–28 (MTAENQSTVTEFILGGLTNRPELQLPLF) are Extracellular-facing. A helical transmembrane segment spans residues 29-49 (LLFLGIYVVTMVGNLGMITLI). Topologically, residues 50–56 (GLNSQLH) are cytoplasmic. The helical transmembrane segment at 57–77 (TPMYFFLSNLSLVDLCYSSVI) threads the bilayer. At 78 to 90 (TPKMLINFVSQRN) the chain is on the extracellular side. The helical transmembrane segment at 91–111 (LISYVGCMSQLYFFLVFVIAE) threads the bilayer. An intrachain disulfide couples cysteine 97 to cysteine 188. The Cytoplasmic segment spans residues 112-133 (CYMLTVMAYDRYVAICQPLLYN). A helical membrane pass occupies residues 134 to 154 (IIMSPALCSLLVAFVYAVGLI). The Extracellular portion of the chain corresponds to 155-195 (GSAIETGLMLKLNYCEDLISHYFCDILPLMKLSCSSTYDVE). Residues 196–216 (MAVFFLAGFDIIVTSLTVLIS) traverse the membrane as a helical segment. Topologically, residues 217-238 (YAFILSSILRISSNEGRSKAFS) are cytoplasmic. A helical membrane pass occupies residues 239 to 259 (TCSSHFAAVGLFYGSTAFMYL). Residues 260 to 270 (KPSTASSLAQE) lie on the Extracellular side of the membrane. Residues 271-291 (NVASVFYTTVIPMFNPLIYSL) form a helical membrane-spanning segment. Over 292–309 (RNKEVKTALDKTLRRKVF) the chain is Cytoplasmic.

It belongs to the G-protein coupled receptor 1 family.

It localises to the cell membrane. Functionally, odorant receptor. The chain is Olfactory receptor 8A1 from Mus musculus (Mouse).